A 504-amino-acid polypeptide reads, in one-letter code: Arabinose import ATP-binding protein AraG (504 aa).

ABC transporter domains lie at 8–243 (LSFR…MVGR) and 256–499 (YGEE…MPKV). 40-47 (GENGAGKS) is an ATP binding site.

This sequence belongs to the ABC transporter superfamily. Arabinose importer (TC 3.A.1.2.2) family. In terms of assembly, the complex is composed of two ATP-binding proteins (AraG), two transmembrane proteins (AraH) and a solute-binding protein (AraF).

It localises to the cell inner membrane. The enzyme catalyses L-arabinose(out) + ATP + H2O = L-arabinose(in) + ADP + phosphate + H(+). Part of the ABC transporter complex AraFGH involved in arabinose import. Responsible for energy coupling to the transport system. This chain is Arabinose import ATP-binding protein AraG, found in Escherichia coli (strain UTI89 / UPEC).